A 157-amino-acid chain; its full sequence is Cytochrome b6-f complex subunit 4 (157 aa).

3 helical membrane passes run 35–55, 94–114, and 130–150; these read ILYI…GLGV, LVGV…AFIE, and LVYL…VLGI.

Belongs to the cytochrome b family. PetD subfamily. In terms of assembly, the 4 large subunits of the cytochrome b6-f complex are cytochrome b6, subunit IV (17 kDa polypeptide, petD), cytochrome f and the Rieske protein, while the 4 small subunits are petG, petL, petM and petN. The complex functions as a dimer.

It localises to the plastid. Its subcellular location is the chloroplast thylakoid membrane. Functionally, component of the cytochrome b6-f complex, which mediates electron transfer between photosystem II (PSII) and photosystem I (PSI), cyclic electron flow around PSI, and state transitions. This Amphidinium carterae (Dinoflagellate) protein is Cytochrome b6-f complex subunit 4.